The sequence spans 577 residues: Arginine--tRNA ligase (577 aa).

Positions 122 to 132 match the 'HIGH' region motif; it reads PNVAKEMHVGH.

The protein belongs to the class-I aminoacyl-tRNA synthetase family. As to quaternary structure, monomer.

The protein resides in the cytoplasm. The catalysed reaction is tRNA(Arg) + L-arginine + ATP = L-arginyl-tRNA(Arg) + AMP + diphosphate. The sequence is that of Arginine--tRNA ligase from Vibrio parahaemolyticus serotype O3:K6 (strain RIMD 2210633).